The primary structure comprises 122 residues: MIQSQTFLNIADNSGARKIMCIRVVGTTYQKYAYIGDIIIAIIKEVVPNTKMEKSEIVRAVVIRTSKEFQRDDGMRIRSDDNAAIIIDQKGNPKGTRVFGPVLQELRQWNFTKIISLAPEVL.

It belongs to the universal ribosomal protein uL14 family. In terms of assembly, part of the 50S ribosomal subunit.

The protein localises to the plastid. It localises to the chloroplast. Binds to 23S rRNA. The polypeptide is Large ribosomal subunit protein uL14c (Gnetum parvifolium (Small-leaved jointfir)).